Consider the following 466-residue polypeptide: Reticulophagy regulator 3 (466 aa).

A disordered region spans residues methionine 1–serine 28. Alanine 2 bears the N-acetylalanine mark. The Cytoplasmic portion of the chain corresponds to alanine 2–tryptophan 80. Threonine 10 is subject to Phosphothreonine. At serine 26 the chain carries Phosphoserine. A helical transmembrane segment spans residues phenylalanine 81–valine 101. Over cysteine 102–lysine 163 the chain is Lumenal. A helical transmembrane segment spans residues glutamine 164–glycine 184. At arginine 185–tyrosine 186 the chain is on the cytoplasmic side. Residues valine 187–valine 207 form a helical membrane-spanning segment. Topologically, residues tyrosine 208–glutamate 381 are lumenal. Serine 258 and serine 260 each carry phosphoserine. Threonine 283 is subject to Phosphothreonine. Residues aspartate 284–arginine 374 are disordered. Serine 285, serine 288, serine 293, and serine 303 each carry phosphoserine. Residues cysteine 294–threonine 310 show a composition bias toward polar residues. A phosphothreonine mark is found at threonine 307 and threonine 310. Serine 313, serine 320, and serine 360 each carry phosphoserine. Over residues leucine 316–proline 331 the composition is skewed to basic and acidic residues. Residues leucine 382 to serine 402 form a helical membrane-spanning segment. The Cytoplasmic segment spans residues glutamine 403 to histidine 466. The tract at residues glycine 412 to histidine 466 is disordered. The segment covering leucine 438 to aspartate 451 has biased composition (acidic residues). Residue threonine 440 is modified to Phosphothreonine. The short motif at aspartate 445 to leucine 450 is the LIR motif element. Residues serine 453 to histidine 466 show a composition bias toward polar residues.

It belongs to the RETREG family. In terms of assembly, interacts with ATG8 family modifier proteins MAP1LC3A, MAP1LC3B, MAP1LC3C, GABARAP, GABARAPL1 and GABARAPL2. Interacts with CANX. Interacts with RTN4 isoform B.

The protein resides in the endoplasmic reticulum membrane. In terms of biological role, endoplasmic reticulum (ER)-anchored autophagy regulator which exists in an inactive state under basal conditions but is activated following cellular stress. When activated, induces ER fragmentation and mediates ER delivery into lysosomes through sequestration into autophagosomes via interaction with ATG8 family proteins. Promotes ER membrane curvature and ER tubulation required for subsequent ER fragmentation and engulfment into autophagosomes. Required for collagen quality control in a LIR motif-dependent manner. Mediates NRF1-enhanced neurite outgrowth. The chain is Reticulophagy regulator 3 from Homo sapiens (Human).